We begin with the raw amino-acid sequence, 226 residues long: Lipid phosphate phosphatase gamma (226 aa).

Methionine 1 bears the N-acetylmethionine mark. Transmembrane regions (helical) follow at residues 24-44 (LGHF…GGFV), 52-72 (ELQG…NEFI), 102-122 (FMFF…GFWF), 128-148 (WIMN…RVYL), and 152-174 (TVAQ…FWVV).

This sequence belongs to the PA-phosphatase related phosphoesterase family. As to expression, expressed in root tips, root branch points, vascular tissue of cotyledons and leaves, pistil, anthers and filaments.

It is found in the plastid. Its subcellular location is the chloroplast inner membrane. Inhibited by Mg(2+). Exhibits phosphatidate phosphatase (PAP) activity in vitro. May play a primary role as PAP in plastids. The polypeptide is Lipid phosphate phosphatase gamma (LPPG) (Arabidopsis thaliana (Mouse-ear cress)).